Here is a 556-residue protein sequence, read N- to C-terminus: Probable Xaa-Pro aminopeptidase SS1G_06948 (556 aa).

Residues D305, D316, E460, and E501 each coordinate Mn(2+).

Belongs to the peptidase M24B family. Mn(2+) serves as cofactor.

It carries out the reaction Release of any N-terminal amino acid, including proline, that is linked to proline, even from a dipeptide or tripeptide.. In terms of biological role, catalyzes the removal of a penultimate prolyl residue from the N-termini of peptides. In Sclerotinia sclerotiorum (strain ATCC 18683 / 1980 / Ss-1) (White mold), this protein is Probable Xaa-Pro aminopeptidase SS1G_06948.